The sequence spans 122 residues: Serum amyloid A-2 protein (122 aa).

The first 19 residues, 1 to 19 (MKLLTSLVFCSLLLGVCHG), serve as a signal peptide directing secretion. The segment covering 89–108 (RGHEDTMADQEANRHGRSGK) has biased composition (basic and acidic residues). The segment at 89–122 (RGHEDTMADQEANRHGRSGKDPNYYRPPGLPAKY) is disordered.

This sequence belongs to the SAA family. In terms of assembly, apolipoprotein of the HDL complex. Expressed by the liver; secreted in plasma.

It is found in the secreted. Major acute phase reactant. This chain is Serum amyloid A-2 protein, found in Mus musculus (Mouse).